A 38-amino-acid chain; its full sequence is Photosystem II reaction center protein L (38 aa).

Residues 17–37 (SLFWGLLLIFVLAVLFSSYFF) traverse the membrane as a helical segment.

Belongs to the PsbL family. PSII is composed of 1 copy each of membrane proteins PsbA, PsbB, PsbC, PsbD, PsbE, PsbF, PsbH, PsbI, PsbJ, PsbK, PsbL, PsbM, PsbT, PsbX, PsbY, PsbZ, Psb30/Ycf12, at least 3 peripheral proteins of the oxygen-evolving complex and a large number of cofactors. It forms dimeric complexes.

The protein resides in the plastid. The protein localises to the chloroplast thylakoid membrane. Its function is as follows. One of the components of the core complex of photosystem II (PSII). PSII is a light-driven water:plastoquinone oxidoreductase that uses light energy to abstract electrons from H(2)O, generating O(2) and a proton gradient subsequently used for ATP formation. It consists of a core antenna complex that captures photons, and an electron transfer chain that converts photonic excitation into a charge separation. This subunit is found at the monomer-monomer interface and is required for correct PSII assembly and/or dimerization. The chain is Photosystem II reaction center protein L from Porphyra purpurea (Red seaweed).